We begin with the raw amino-acid sequence, 281 residues long: Bifunctional protein FolD (281 aa).

Residues G165–G167, T192, and V233 contribute to the NADP(+) site.

The protein belongs to the tetrahydrofolate dehydrogenase/cyclohydrolase family. As to quaternary structure, homodimer.

The catalysed reaction is (6R)-5,10-methylene-5,6,7,8-tetrahydrofolate + NADP(+) = (6R)-5,10-methenyltetrahydrofolate + NADPH. It carries out the reaction (6R)-5,10-methenyltetrahydrofolate + H2O = (6R)-10-formyltetrahydrofolate + H(+). The protein operates within one-carbon metabolism; tetrahydrofolate interconversion. Its function is as follows. Catalyzes the oxidation of 5,10-methylenetetrahydrofolate to 5,10-methenyltetrahydrofolate and then the hydrolysis of 5,10-methenyltetrahydrofolate to 10-formyltetrahydrofolate. This Mycobacteroides abscessus (strain ATCC 19977 / DSM 44196 / CCUG 20993 / CIP 104536 / JCM 13569 / NCTC 13031 / TMC 1543 / L948) (Mycobacterium abscessus) protein is Bifunctional protein FolD.